The primary structure comprises 82 residues: RNA-binding protein Hfq (82 aa).

The 61-residue stretch at 9–69 (DHFLNQLRKE…ISTFSPARNV (61 aa)) folds into the Sm domain.

This sequence belongs to the Hfq family. Homohexamer.

Functionally, RNA chaperone that binds small regulatory RNA (sRNAs) and mRNAs to facilitate mRNA translational regulation in response to envelope stress, environmental stress and changes in metabolite concentrations. Also binds with high specificity to tRNAs. The polypeptide is RNA-binding protein Hfq (Exiguobacterium sp. (strain ATCC BAA-1283 / AT1b)).